Reading from the N-terminus, the 431-residue chain is Glutamyl-tRNA(Gln) amidotransferase subunit A (431 aa).

Active-site charge relay system residues include lysine 55 and serine 130. Serine 154 acts as the Acyl-ester intermediate in catalysis.

This sequence belongs to the amidase family. GatA subfamily. In terms of assembly, heterotrimer of A, B and C subunits.

It catalyses the reaction L-glutamyl-tRNA(Gln) + L-glutamine + ATP + H2O = L-glutaminyl-tRNA(Gln) + L-glutamate + ADP + phosphate + H(+). In terms of biological role, allows the formation of correctly charged Gln-tRNA(Gln) through the transamidation of misacylated Glu-tRNA(Gln) in organisms which lack glutaminyl-tRNA synthetase. The reaction takes place in the presence of glutamine and ATP through an activated gamma-phospho-Glu-tRNA(Gln). The polypeptide is Glutamyl-tRNA(Gln) amidotransferase subunit A (Methanococcus maripaludis (strain C6 / ATCC BAA-1332)).